Here is a 510-residue protein sequence, read N- to C-terminus: Inositol-3-phosphate synthase 1 (510 aa).

24 residues coordinate NAD(+): G70, G71, N72, N73, D143, I180, Q190, R193, T230, A231, N232, T233, G281, S282, D306, S309, N340, N341, D342, K355, G393, D394, D422, and S423.

It belongs to the myo-inositol 1-phosphate synthase family. The cofactor is NAD(+).

It is found in the cytoplasm. The protein localises to the cytosol. It localises to the nucleus. The enzyme catalyses D-glucose 6-phosphate = 1D-myo-inositol 3-phosphate. It functions in the pathway polyol metabolism; myo-inositol biosynthesis; myo-inositol from D-glucose 6-phosphate: step 1/2. In terms of biological role, key enzyme in myo-inositol biosynthesis pathway that catalyzes the conversion of glucose 6-phosphate to 1-myo-inositol 1-phosphate in a NAD-dependent manner. May play a role in oxidative stress resistance and influences ascorbate levels. The sequence is that of Inositol-3-phosphate synthase 1 from Populus euphratica (Euphrates poplar).